We begin with the raw amino-acid sequence, 70 residues long: Conotoxin Cl9.1 (70 aa).

A signal peptide spans 1–20; that stretch reads MMGKLGVVLFICLVLFPLET. A propeptide spanning residues 21–50 is cleaved from the precursor; that stretch reads LQLEGGQQADRHVDQLEGNPNRETRTIEVR. 3 disulfide bridges follow: Cys51-Cys63, Cys56-Cys67, and Cys61-Cys70.

Belongs to the conotoxin M superfamily. Expressed by the venom duct.

The protein resides in the secreted. This chain is Conotoxin Cl9.1, found in Californiconus californicus (California cone).